The sequence spans 854 residues: Periodic tryptophan protein 2 homolog (854 aa).

WD repeat units lie at residues 9–52, 53–93, 94–132, 144–183, 188–227, 252–291, 294–334, 337–376, 379–418, 422–464, 465–504, 507–546, and 569–608; these read NLVG…TFPF, ENHK…LHYF, NFKSPVGAIEFSPNGKFFAVSLGKLIQVWRTPNSLEERE, GHFDDIVSISWSADSRFFISTSKDLTARLHSVDPIEGFHP, GHKNTVVSGFFSKDQQTIYTVSKDGALFVWKYSPLFQAGE, NQNSKLRCAAFHPTSNLLVVGFSSGLFGIYELPSFTMLYQ, ITQS…YVLK, SHYDALSTLQYSSDGQRIITGADDGKIKVWDMNSGFCIVT, QHTSAVSGLCFSKRGNVLFSSSLDGSVRAWDLIRYRNFRT, PSRV…ETLA, GHEGPVSSLSFNSSGSLLASGSWDKTVRIWDIFSRSGIVE, PIPSDVLSLAFHPDGKEVCVASLDGQLTFWNVQEGKQTSL, and SLNKTFTSICYSADGSCVLSAGTSKYVCLYDIITGVLIKK. Thr640 bears the Phosphothreonine mark. Ser645 is modified (phosphoserine). One copy of the WD 14 repeat lies at 668–709; the sequence is TRPEIICHGVQFSPSGGAFAAATTEGLMIYSLYNDFLFDPIN.

It belongs to the WD repeat PWP2 family.

The polypeptide is Periodic tryptophan protein 2 homolog (Schizosaccharomyces pombe (strain 972 / ATCC 24843) (Fission yeast)).